A 185-amino-acid chain; its full sequence is Ribosome-recycling factor (185 aa).

Belongs to the RRF family.

It is found in the cytoplasm. Responsible for the release of ribosomes from messenger RNA at the termination of protein biosynthesis. May increase the efficiency of translation by recycling ribosomes from one round of translation to another. The protein is Ribosome-recycling factor of Thermotoga petrophila (strain ATCC BAA-488 / DSM 13995 / JCM 10881 / RKU-1).